The primary structure comprises 95 residues: Small ribosomal subunit protein bS20c (95 aa).

The protein belongs to the bacterial ribosomal protein bS20 family.

It is found in the plastid. Its subcellular location is the chloroplast. Binds directly to 16S ribosomal RNA. This chain is Small ribosomal subunit protein bS20c, found in Pyropia yezoensis (Susabi-nori).